A 105-amino-acid chain; its full sequence is Large ribosomal subunit protein uL24 (105 aa).

It belongs to the universal ribosomal protein uL24 family. Part of the 50S ribosomal subunit.

Functionally, one of two assembly initiator proteins, it binds directly to the 5'-end of the 23S rRNA, where it nucleates assembly of the 50S subunit. Its function is as follows. One of the proteins that surrounds the polypeptide exit tunnel on the outside of the subunit. The protein is Large ribosomal subunit protein uL24 of Mycobacterium leprae (strain Br4923).